The chain runs to 85 residues: Arminin 2b (85 aa).

The N-terminal stretch at 1–18 is a signal peptide; it reads MKTVFAILFLAFIALTYA. The propeptide occupies 19–57; sequence RSYEDVKEEIKNEIEKEILEDLEEESDELNDKSKEINDA. Position 82 is an alanine amide (A82).

It belongs to the arminin family. As to expression, expressed in entodermal epithelium along the body column.

It is found in the secreted. It localises to the target cell membrane. Its function is as follows. Antimicrobial peptide with a broad-spectrum antimicrobial activity. Keeps its antibacterial activity under a wide range of salt concentrations that mimic physiological conditions of human blood, which is surprising, since Hydra is an obligate freshwater animal with nearly no salt tolerance. Does not affect red blood cells. This Hydra vulgaris (Hydra) protein is Arminin 2b.